A 389-amino-acid chain; its full sequence is Nuclear receptor subfamily 2 group F member 1-B (389 aa).

A disordered region spans residues 19 to 39; the sequence is DDQSAAGREHLQHRHSPKSAE. The segment at residues 51–126 is a DNA-binding region (nuclear receptor); that stretch reads HVECVVCGDK…VGMRREAVQR (76 aa). 2 NR C4-type zinc fingers span residues 54 to 74 and 90 to 109; these read CVVC…CEGC and CRAN…CQYC. Residues 152-378 form the NR LBD domain; sequence YLSGYISLLL…TLIRDMLLSG (227 aa).

This sequence belongs to the nuclear hormone receptor family. NR2 subfamily. As to expression, expressed the retina, where expression is restricted to the outer nuclear layer.

It is found in the nucleus. Functionally, putative transcription factor that is required in photoreceptor cells precursors during eye development. This Danio rerio (Zebrafish) protein is Nuclear receptor subfamily 2 group F member 1-B.